Reading from the N-terminus, the 282-residue chain is Pantothenate synthetase (282 aa).

31-38 contributes to the ATP binding site; the sequence is MGALHDGH. The active-site Proton donor is the H38. Position 62 (Q62) interacts with (R)-pantoate. Beta-alanine is bound at residue Q62. 148–151 is an ATP binding site; sequence GKKD. Position 154 (Q154) interacts with (R)-pantoate. ATP contacts are provided by residues V177 and 185-188; that span reads KSSR.

Belongs to the pantothenate synthetase family. Homodimer.

The protein resides in the cytoplasm. It carries out the reaction (R)-pantoate + beta-alanine + ATP = (R)-pantothenate + AMP + diphosphate + H(+). Its pathway is cofactor biosynthesis; (R)-pantothenate biosynthesis; (R)-pantothenate from (R)-pantoate and beta-alanine: step 1/1. Its function is as follows. Catalyzes the condensation of pantoate with beta-alanine in an ATP-dependent reaction via a pantoyl-adenylate intermediate. The polypeptide is Pantothenate synthetase (Staphylococcus saprophyticus subsp. saprophyticus (strain ATCC 15305 / DSM 20229 / NCIMB 8711 / NCTC 7292 / S-41)).